The chain runs to 256 residues: MTDLKKAAQRAIELMDLTTLNDDDTDQKVIDLCHKAVTPAGNTAAICIYPRFIPIARKTLDELGAEDIQIATVTNFPHGNDDIAIAVLETRAAVAYGADEVDVVFPYRALMEGNETVGYELVKACKEACGEVLLKVIIESGVLADPVLIRRASELSIEAGADFIKTSTGKVPVNATLEAAEIMLTVISEKNTKVGFKPAGGVRDAAQAAEFLGVAERILGADWVSPRTFRFGASSLLNSLLHTLELADAPKRTQGY.

Aspartate 102 (proton donor/acceptor) is an active-site residue. Lysine 165 (schiff-base intermediate with acetaldehyde) is an active-site residue. Residue lysine 197 is the Proton donor/acceptor of the active site.

It belongs to the DeoC/FbaB aldolase family. DeoC type 2 subfamily.

It is found in the cytoplasm. The catalysed reaction is 2-deoxy-D-ribose 5-phosphate = D-glyceraldehyde 3-phosphate + acetaldehyde. The protein operates within carbohydrate degradation; 2-deoxy-D-ribose 1-phosphate degradation; D-glyceraldehyde 3-phosphate and acetaldehyde from 2-deoxy-alpha-D-ribose 1-phosphate: step 2/2. Catalyzes a reversible aldol reaction between acetaldehyde and D-glyceraldehyde 3-phosphate to generate 2-deoxy-D-ribose 5-phosphate. The chain is Deoxyribose-phosphate aldolase from Shewanella oneidensis (strain ATCC 700550 / JCM 31522 / CIP 106686 / LMG 19005 / NCIMB 14063 / MR-1).